Consider the following 671-residue polypeptide: UvrABC system protein B (671 aa).

Residues 25–412 (EGIEAGLAHQ…AGRVVEQVVR (388 aa)) form the Helicase ATP-binding domain. 38 to 45 (GVTGSGKT) contacts ATP. The short motif at 91–114 (YYDYYQPEAYVPSSDTFIEKDASI) is the Beta-hairpin element. In terms of domain architecture, Helicase C-terminal spans 429–582 (QVDDLLSEIT…QIAFNLANGI (154 aa)). A disordered region spans residues 601–623 (PGSRSKKRKGMAKAAEENARYEN). Positions 614 to 623 (AAEENARYEN) are enriched in basic and acidic residues. The region spanning 632–667 (TKRIRQLEEKMYQLARDLEFEAAAQMRDEITKLRER) is the UVR domain.

This sequence belongs to the UvrB family. Forms a heterotetramer with UvrA during the search for lesions. Interacts with UvrC in an incision complex.

It localises to the cytoplasm. The UvrABC repair system catalyzes the recognition and processing of DNA lesions. A damage recognition complex composed of 2 UvrA and 2 UvrB subunits scans DNA for abnormalities. Upon binding of the UvrA(2)B(2) complex to a putative damaged site, the DNA wraps around one UvrB monomer. DNA wrap is dependent on ATP binding by UvrB and probably causes local melting of the DNA helix, facilitating insertion of UvrB beta-hairpin between the DNA strands. Then UvrB probes one DNA strand for the presence of a lesion. If a lesion is found the UvrA subunits dissociate and the UvrB-DNA preincision complex is formed. This complex is subsequently bound by UvrC and the second UvrB is released. If no lesion is found, the DNA wraps around the other UvrB subunit that will check the other stand for damage. The polypeptide is UvrABC system protein B (Pseudomonas fluorescens (strain ATCC BAA-477 / NRRL B-23932 / Pf-5)).